A 184-amino-acid polypeptide reads, in one-letter code: ATP synthase subunit b, chloroplastic (184 aa).

A helical membrane pass occupies residues 27–49; that stretch reads LATNLINLSVVFGVLIFFGKGVL.

It belongs to the ATPase B chain family. F-type ATPases have 2 components, F(1) - the catalytic core - and F(0) - the membrane proton channel. F(1) has five subunits: alpha(3), beta(3), gamma(1), delta(1), epsilon(1). F(0) has four main subunits: a(1), b(1), b'(1) and c(10-14). The alpha and beta chains form an alternating ring which encloses part of the gamma chain. F(1) is attached to F(0) by a central stalk formed by the gamma and epsilon chains, while a peripheral stalk is formed by the delta, b and b' chains.

The protein localises to the plastid. It is found in the chloroplast thylakoid membrane. Its function is as follows. F(1)F(0) ATP synthase produces ATP from ADP in the presence of a proton or sodium gradient. F-type ATPases consist of two structural domains, F(1) containing the extramembraneous catalytic core and F(0) containing the membrane proton channel, linked together by a central stalk and a peripheral stalk. During catalysis, ATP synthesis in the catalytic domain of F(1) is coupled via a rotary mechanism of the central stalk subunits to proton translocation. Component of the F(0) channel, it forms part of the peripheral stalk, linking F(1) to F(0). The chain is ATP synthase subunit b, chloroplastic from Aethionema cordifolium (Lebanon stonecress).